A 121-amino-acid polypeptide reads, in one-letter code: Amelogenin (121 aa).

Disordered regions lie at residues 1 to 20 and 32 to 121; these read LHHQ…HALQ and QPMQ…WPAT. Residues 48–58 are compositionally biased toward polar residues; that stretch reads SVTPTQHHQSN. A compositionally biased stretch (low complexity) spans 59–71; it reads LPQPAQQPFQPQV. Pro residues predominate over residues 85–111; it reads PAHPMPPMPQPPLPPMFPMQPLPPLLP.

The protein belongs to the amelogenin family.

It is found in the secreted. It localises to the extracellular space. The protein resides in the extracellular matrix. Its function is as follows. Plays a role in the biomineralization of teeth. Seems to regulate the formation of crystallites during the secretory stage of tooth enamel development. Thought to play a major role in the structural organization and mineralization of developing enamel. The protein is Amelogenin (AMEL) of Ornithorhynchus anatinus (Duckbill platypus).